The sequence spans 200 residues: Transgelin (200 aa).

S2 carries the post-translational modification N-acetylserine. S11 carries the post-translational modification Phosphoserine. In terms of domain architecture, Calponin-homology (CH) spans 26–136; the sequence is PEAIQNIKIW…QTLKSLSRYA (111 aa). The segment at 144–168 is disordered; sequence FPVLGPQLSTKKPRPPVKSKPKHLQ. The interval 151 to 164 is interaction with SH3 domain of ABP1; the sequence is LSTKKPRPPVKSKP. A compositionally biased stretch (basic residues) spans 154-165; sequence KKPRPPVKSKPK.

As to quaternary structure, binds to actin. Interacts with ABP1.

The protein resides in the cytoplasm. It localises to the cytoskeleton. The protein localises to the actin patch. Functionally, has actin-binding and actin-bundling activity. Stabilizes actin filaments against disassembly. The chain is Transgelin (SCP1) from Saccharomyces cerevisiae (strain ATCC 204508 / S288c) (Baker's yeast).